The following is a 322-amino-acid chain: HPr kinase/phosphorylase (322 aa).

Catalysis depends on residues His-146 and Lys-167. Residue 161–168 (GDSGLGKS) coordinates ATP. Mg(2+) is bound at residue Ser-168. Asp-185 (proton acceptor; for phosphorylation activity. Proton donor; for dephosphorylation activity) is an active-site residue. Residues 209-218 (LEVRGLGLLD) are important for the catalytic mechanism of both phosphorylation and dephosphorylation. Residue Glu-210 coordinates Mg(2+). The active site involves Arg-250. Residues 271-276 (QVAAGR) are important for the catalytic mechanism of dephosphorylation.

It belongs to the HPrK/P family. As to quaternary structure, homohexamer. It depends on Mg(2+) as a cofactor.

The enzyme catalyses [HPr protein]-L-serine + ATP = [HPr protein]-O-phospho-L-serine + ADP + H(+). It catalyses the reaction [HPr protein]-O-phospho-L-serine + phosphate + H(+) = [HPr protein]-L-serine + diphosphate. Catalyzes the ATP- as well as the pyrophosphate-dependent phosphorylation of a specific serine residue in HPr, a phosphocarrier protein of the phosphoenolpyruvate-dependent sugar phosphotransferase system (PTS). HprK/P also catalyzes the pyrophosphate-producing, inorganic phosphate-dependent dephosphorylation (phosphorolysis) of seryl-phosphorylated HPr (P-Ser-HPr). The polypeptide is HPr kinase/phosphorylase (Paraburkholderia phymatum (strain DSM 17167 / CIP 108236 / LMG 21445 / STM815) (Burkholderia phymatum)).